The following is a 613-amino-acid chain: Pentatricopeptide repeat-containing protein At2g02750 (613 aa).

PPR repeat units follow at residues 30–64, 65–99, 101–126, 128–162, 163–193, 194–228, 230–264, 265–295, 297–331, 332–366, 367–401, 402–432, 435–469, 470–500, and 506–539; these read NKFTFPPLLKSCAKLGDVVQGRILHAQVVKTGFFV, DVFTATALVSMYMKVKQVTDALKVLDEMPERGIAS, NAAVSGLLENGFCRDAFRMFGDARVS, SGMNSVTVASVLGGCGDIEGGMQLHCLAMKSGFEM, EVYVGTSLVSMYSRCGEWVLAARMFEKVPHK, SVVTYNAFISGLMENGVMNLVPSVFNLMRKFSSEE, NDVTFVNAITACASLLNLQYGRQLHGLVMKKEFQF, ETMVGTALIDMYSKCRCWKSAYIVFTELKDT, NLISWNSVISGMMINGQHETAVELFEKLDSEGLKP, DSATWNSLISGFSQLGKVIEAFKFFERMLSVVMVP, SLKCLTSLLSACSDIWTLKNGKEIHGHVIKAAAER, DIFVLTSLIDMYMKCGLSSWARRIFDRFEPK, DPVFWNVMISGYGKHGECESAIEIFELLREEKVEP, SLATFTAVLSACSHCGNVEKGSQIFRLMQEE, and STEHIGCMIDLLGRSGRLREAKEVIDQMSEPSSS. A type E motif; degenerate region spans residues 540–613; it reads VYSSLLGSCR…VKLPGLSLSG (74 aa).

The protein belongs to the PPR family. PCMP-E subfamily.

The protein is Pentatricopeptide repeat-containing protein At2g02750 (PCMP-E22) of Arabidopsis thaliana (Mouse-ear cress).